The chain runs to 286 residues: 4-hydroxybenzoate octaprenyltransferase (286 aa).

7 helical membrane passes run 21-40, 95-115, 142-162, 167-187, 210-230, 235-255, and 266-286; these read GTLL…AGGM, ILFV…NGLV, FLGI…TGEV, WWLF…YAMV, QIIG…GWSA, LYGL…MLIF, and FLNN…DYLI.

The protein belongs to the UbiA prenyltransferase family. It depends on Mg(2+) as a cofactor.

It localises to the cell inner membrane. The enzyme catalyses all-trans-octaprenyl diphosphate + 4-hydroxybenzoate = 4-hydroxy-3-(all-trans-octaprenyl)benzoate + diphosphate. It participates in cofactor biosynthesis; ubiquinone biosynthesis. Functionally, catalyzes the prenylation of para-hydroxybenzoate (PHB) with an all-trans polyprenyl group. Mediates the second step in the final reaction sequence of ubiquinone-8 (UQ-8) biosynthesis, which is the condensation of the polyisoprenoid side chain with PHB, generating the first membrane-bound Q intermediate 3-octaprenyl-4-hydroxybenzoate. The protein is 4-hydroxybenzoate octaprenyltransferase of Shewanella baltica (strain OS155 / ATCC BAA-1091).